The primary structure comprises 173 residues: Disulfide bond formation protein B (173 aa).

Residues 1 to 11 are Cytoplasmic-facing; sequence MNALQWSFRAQ. A helical membrane pass occupies residues 12-28; it reads CLTGFLFCTGLLAYAIF. At 29–46 the chain is on the periplasmic side; that stretch reads LQLHQGLEPCPLCIFQRI. A disulfide bridge links Cys-38 with Cys-41. A helical transmembrane segment spans residues 47 to 63; that stretch reads AFAVLGILFLIAGLYNS. The Cytoplasmic segment spans residues 64-70; the sequence is SNVYTRK. Residues 71 to 88 traverse the membrane as a helical segment; it reads AYGLLIFLTAAIGTGIAG. The Periplasmic segment spans residues 89-145; that stretch reads RHVWVQLMPHNTISSCGSPLSFLSETMGPFEVFRTVLTGTSDCGNIDWRFLGLSMPM. A disulfide bridge connects residues Cys-104 and Cys-131. The helical transmembrane segment at 146-164 threads the bilayer; the sequence is WSMFWFVALALLGLLVGFK. At 165–173 the chain is on the cytoplasmic side; that stretch reads AERRKPLFS.

This sequence belongs to the DsbB family.

Its subcellular location is the cell inner membrane. Required for disulfide bond formation in some periplasmic proteins. Acts by oxidizing the DsbA protein. In Xylella fastidiosa (strain 9a5c), this protein is Disulfide bond formation protein B.